The chain runs to 335 residues: Fructose-1,6-bisphosphatase class 1 (335 aa).

Mg(2+) contacts are provided by Glu93, Asp117, Leu119, and Asp120. Substrate is bound by residues 120–123, Asn213, Tyr244, and Lys274; that span reads DGSS. Glu280 contacts Mg(2+).

The protein belongs to the FBPase class 1 family. Homotetramer. It depends on Mg(2+) as a cofactor.

Its subcellular location is the cytoplasm. The catalysed reaction is beta-D-fructose 1,6-bisphosphate + H2O = beta-D-fructose 6-phosphate + phosphate. It participates in carbohydrate biosynthesis; gluconeogenesis. In Flavobacterium psychrophilum (strain ATCC 49511 / DSM 21280 / CIP 103535 / JIP02/86), this protein is Fructose-1,6-bisphosphatase class 1.